The sequence spans 655 residues: tRNA uridine 5-carboxymethylaminomethyl modification enzyme MnmG (655 aa).

Position 13 to 18 (13 to 18) interacts with FAD; it reads GGGHAG. 281–295 lines the NAD(+) pocket; that stretch reads GPRYCPSVEDKINRF.

This sequence belongs to the MnmG family. In terms of assembly, homodimer. Heterotetramer of two MnmE and two MnmG subunits. FAD is required as a cofactor.

The protein localises to the cytoplasm. NAD-binding protein involved in the addition of a carboxymethylaminomethyl (cmnm) group at the wobble position (U34) of certain tRNAs, forming tRNA-cmnm(5)s(2)U34. The protein is tRNA uridine 5-carboxymethylaminomethyl modification enzyme MnmG of Paracidovorax citrulli (strain AAC00-1) (Acidovorax citrulli).